An 873-amino-acid chain; its full sequence is Cyanophycin synthetase (873 aa).

In terms of domain architecture, ATP-grasp spans 224–480 (KTILQDAGIP…VAAPVLDMLF (257 aa)). Residue 495-501 (GTNGKTT) coordinates ATP.

The protein in the C-terminal section; belongs to the MurCDEF family. As to quaternary structure, homodimer.

It catalyses the reaction [L-4-(L-arginin-2-N-yl)aspartate](n) + L-aspartate + ATP = [L-4-(L-arginin-2-N-yl)aspartate](n)-L-aspartate + ADP + phosphate + H(+). The catalysed reaction is [L-4-(L-arginin-2-N-yl)aspartate](n)-L-aspartate + L-arginine + ATP = [L-4-(L-arginin-2-N-yl)aspartate](n+1) + ADP + phosphate + H(+). Catalyzes the ATP-dependent polymerization of arginine and aspartate to multi-L-arginyl-poly-L-aspartic acid (cyanophycin; a water-insoluble reserve polymer). In Synechocystis sp. (strain ATCC 27184 / PCC 6803 / Kazusa), this protein is Cyanophycin synthetase (cphA).